Consider the following 546-residue polypeptide: Chaperonin GroEL (546 aa).

ATP is bound by residues 30–33 (TLGP), lysine 51, 87–91 (DGTTT), glycine 415, and aspartate 495.

This sequence belongs to the chaperonin (HSP60) family. As to quaternary structure, forms a cylinder of 14 subunits composed of two heptameric rings stacked back-to-back. Interacts with the co-chaperonin GroES.

It is found in the cytoplasm. It catalyses the reaction ATP + H2O + a folded polypeptide = ADP + phosphate + an unfolded polypeptide.. Its function is as follows. Together with its co-chaperonin GroES, plays an essential role in assisting protein folding. The GroEL-GroES system forms a nano-cage that allows encapsulation of the non-native substrate proteins and provides a physical environment optimized to promote and accelerate protein folding. This Brucella melitensis biotype 2 (strain ATCC 23457) protein is Chaperonin GroEL.